The primary structure comprises 69 residues: Large ribosomal subunit protein bL31 (69 aa).

4 residues coordinate Zn(2+): Cys17, Cys19, Cys37, and Cys40.

The protein belongs to the bacterial ribosomal protein bL31 family. Type A subfamily. As to quaternary structure, part of the 50S ribosomal subunit. Zn(2+) is required as a cofactor.

Functionally, binds the 23S rRNA. This Caldicellulosiruptor bescii (strain ATCC BAA-1888 / DSM 6725 / KCTC 15123 / Z-1320) (Anaerocellum thermophilum) protein is Large ribosomal subunit protein bL31.